The chain runs to 142 residues: Transcriptional regulator MraZ (142 aa).

SpoVT-AbrB domains lie at 5 to 51 (ASSL…PRPE) and 77 to 120 (AMDV…DKAT).

Belongs to the MraZ family. In terms of assembly, forms oligomers.

The protein localises to the cytoplasm. It localises to the nucleoid. The polypeptide is Transcriptional regulator MraZ (Acidovorax ebreus (strain TPSY) (Diaphorobacter sp. (strain TPSY))).